Here is a 105-residue protein sequence, read N- to C-terminus: Fluoride-specific ion channel FluC (105 aa).

Transmembrane regions (helical) follow at residues phenylalanine 14–valine 34, leucine 44–leucine 64, and alanine 79–leucine 99. Residues glycine 54 and threonine 57 each coordinate Na(+).

This sequence belongs to the fluoride channel Fluc/FEX (TC 1.A.43) family.

It localises to the cell inner membrane. It carries out the reaction fluoride(in) = fluoride(out). Its activity is regulated as follows. Na(+) is not transported, but it plays an essential structural role and its presence is essential for fluoride channel function. Fluoride-specific ion channel. Important for reducing fluoride concentration in the cell, thus reducing its toxicity. This is Fluoride-specific ion channel FluC from Jannaschia sp. (strain CCS1).